We begin with the raw amino-acid sequence, 572 residues long: MPLPWISVIWFAYLIVIFVLIVVASVFIHVYQTPRDRSSFVTFICVFSIAALLATVMLLPVDVALVSSTISSALGQREEWATQEEVDKITYSLTIIYYSLYFLDALLCFVGIPFAYFWHEEYDEVAFEAGDQTACKRFWAATKYTLTFIAVVIALVLVGFFAPMMESQPGHDLGYWRGYLIENQGEHAFTFLLGFVTIIGSCLYAFYTPSGLAMLPALFLRKSSSFATQTLGGSTAMELNFNRERQRQLEGRCGGNSALLSAKDRRELDTLVREERTLIRRQRLIEGRQEEDQSWPVTVYSKLKTILRPFRLLGGFCLFLVGLSTWISLLMTVVDKLINSPCKHHCGYVLSRTNFNPISWIFIQSSRAFPTDYIIFALIVFFFFWGSVVGVVAVGIRFLWIRIFQIRKGHTSPQAMLLATAVLTLITLGLNYSIVMMLVPGYATFGPQTFCDLAPTSSEEQSDCSNHRHLVKPCSEKADSTAADKTCTPSVASTILNRVALNFPLFGALLLWAHFLFLAGGGRRRGRGRESVSKHQKKRQSYMRGCPIASREPATSNYERLFKEGFFIFKRR.

Helical transmembrane passes span 8–28 (VIWF…SVFI), 40–60 (FVTF…MLLP), 95–115 (IIYY…IPFA), 145–165 (TLTF…APMM), 188–208 (AFTF…AFYT), 314–334 (GGFC…MTVV), 374–394 (IIFA…VVAV), 421–441 (AVLT…LVPG), and 499–519 (VALN…LFLA). The interval 522–544 (GRRRGRGRESVSKHQKKRQSYMR) is disordered.

The protein belongs to the LIMR family. LMBRD1 subfamily.

Its subcellular location is the lysosome membrane. Probable lysosomal cobalamin transporter. Required to export cobalamin from lysosomes allowing its conversion to cofactors. The polypeptide is Probable lysosomal cobalamin transporter (Aspergillus fumigatus (strain ATCC MYA-4609 / CBS 101355 / FGSC A1100 / Af293) (Neosartorya fumigata)).